The chain runs to 579 residues: Glutamine--tRNA ligase (579 aa).

The 'HIGH' region motif lies at 41–51 (PEPNGYLHIGH). Residues 42 to 44 (EPN) and 48 to 54 (HIGHAKA) contribute to the ATP site. Asp74 and Tyr218 together coordinate L-glutamine. ATP contacts are provided by residues Thr237, 285-286 (RL), and 293-295 (MSK). The 'KMSKS' region signature appears at 292 to 296 (VMSKR).

Belongs to the class-I aminoacyl-tRNA synthetase family. Monomer.

It is found in the cytoplasm. It catalyses the reaction tRNA(Gln) + L-glutamine + ATP = L-glutaminyl-tRNA(Gln) + AMP + diphosphate. This Xanthomonas oryzae pv. oryzae (strain MAFF 311018) protein is Glutamine--tRNA ligase.